We begin with the raw amino-acid sequence, 624 residues long: Probable potassium transport system protein Kup 2 (624 aa).

Transmembrane regions (helical) follow at residues 14–34, 51–71, 97–117, 133–153, 163–183, 211–231, 245–265, 283–303, 335–355, 364–384, 393–413, and 416–436; these read LSFA…LYAF, ILSL…LVIV, GGWL…DGML, LSPN…FFLF, IGVY…ILGF, SALF…ALFA, WFAV…AFVL, FLPV…QAII, VYLP…VVIF, AYGI…GIIA, FKIL…AGNI, and LLTG…VMYT.

Belongs to the HAK/KUP transporter (TC 2.A.72) family.

The protein localises to the cell inner membrane. The enzyme catalyses K(+)(in) + H(+)(in) = K(+)(out) + H(+)(out). Transport of potassium into the cell. Likely operates as a K(+):H(+) symporter. In Legionella pneumophila (strain Lens), this protein is Probable potassium transport system protein Kup 2.